Consider the following 360-residue polypeptide: 4-hydroxy-3-methylbut-2-en-1-yl diphosphate synthase (flavodoxin) (360 aa).

Residues Cys-265, Cys-268, Cys-300, and Glu-307 each contribute to the [4Fe-4S] cluster site.

The protein belongs to the IspG family. It depends on [4Fe-4S] cluster as a cofactor.

It carries out the reaction (2E)-4-hydroxy-3-methylbut-2-enyl diphosphate + oxidized [flavodoxin] + H2O + 2 H(+) = 2-C-methyl-D-erythritol 2,4-cyclic diphosphate + reduced [flavodoxin]. Its pathway is isoprenoid biosynthesis; isopentenyl diphosphate biosynthesis via DXP pathway; isopentenyl diphosphate from 1-deoxy-D-xylulose 5-phosphate: step 5/6. Functionally, converts 2C-methyl-D-erythritol 2,4-cyclodiphosphate (ME-2,4cPP) into 1-hydroxy-2-methyl-2-(E)-butenyl 4-diphosphate. The sequence is that of 4-hydroxy-3-methylbut-2-en-1-yl diphosphate synthase (flavodoxin) from Brevibacillus brevis (strain 47 / JCM 6285 / NBRC 100599).